A 407-amino-acid polypeptide reads, in one-letter code: MSRRLFTSESVTEGHPDKIADRISDTVLDALLARDPRARVAVETLITTGQVHIAGEVTTTAYAPIAQLVRDTVLSIGYDSSAKGFDGASCGVSVSIGAQSPDIARGVDTAYERRGGGTAPGGPGDELDRQGAGDQGLMFGYACDETPELMPLPINLAHRLSRRLSEVRKNGTIPYLRPDGKTQVTIEYDGDKAVRLDTVVVSSQHASGIDLDSLLAPDIRRHVVEPVLAGLAEDGIKLDTAGYRLLVNPTGRFEIGGPMGDAGLTGRKIIIDTYGGMARHGGGAFSGKDPSKVDRSAAYAMRWVAKNVVAAGLASRCEVQVAYAIGKAEPVGLFVETFGTATVDVERIEQAIGEVFDLRPAAIIRDLDLLRPIYAKTAAYGHFGRELPEFTWERTDRTEQLIAAAGL.

His-15 lines the ATP pocket. Asp-17 serves as a coordination point for Mg(2+). Glu-43 provides a ligand contact to K(+). The L-methionine site is built by Glu-56 and Gln-99. The segment at 99–109 (QSPDIARGVDT) is flexible loop. The disordered stretch occupies residues 112–131 (ERRGGGTAPGGPGDELDRQG). Residues 179–181 (DGK), 252–253 (RF), Asp-261, 267–268 (RK), Ala-284, and Lys-288 each bind ATP. Asp-261 is an L-methionine binding site. An L-methionine-binding site is contributed by Lys-292.

This sequence belongs to the AdoMet synthase family. As to quaternary structure, homotetramer; dimer of dimers. Mg(2+) serves as cofactor. K(+) is required as a cofactor.

Its subcellular location is the cytoplasm. It catalyses the reaction L-methionine + ATP + H2O = S-adenosyl-L-methionine + phosphate + diphosphate. Its pathway is amino-acid biosynthesis; S-adenosyl-L-methionine biosynthesis; S-adenosyl-L-methionine from L-methionine: step 1/1. In terms of biological role, catalyzes the formation of S-adenosylmethionine (AdoMet) from methionine and ATP. The overall synthetic reaction is composed of two sequential steps, AdoMet formation and the subsequent tripolyphosphate hydrolysis which occurs prior to release of AdoMet from the enzyme. This is S-adenosylmethionine synthase from Streptomyces fradiae (Streptomyces roseoflavus).